Here is a 210-residue protein sequence, read N- to C-terminus: Na(+)-translocating NADH-quinone reductase subunit D (210 aa).

Transmembrane regions (helical) follow at residues 42–62, 72–92, 103–123, 131–151, and 178–198; these read FVMTLAVTFVTALSNFSVSLI, IIVQMAIIASLVIVVDQVLKA, VFVGLIITNCIVMGRAEAFAM, LIDGIGNGLGYGFVLITVGFF, and NGLMLLAPSAFFLIGFLIWVI.

This sequence belongs to the NqrDE/RnfAE family. Composed of six subunits; NqrA, NqrB, NqrC, NqrD, NqrE and NqrF.

It localises to the cell inner membrane. It carries out the reaction a ubiquinone + n Na(+)(in) + NADH + H(+) = a ubiquinol + n Na(+)(out) + NAD(+). With respect to regulation, this reaction is tightly coupled to the Na(+) pumping activity and specifically requires Na(+) for activity. Inhibited by korormicin and 2-N-heptyl-4-hydroxyquinoline N-oxide (HQNO). NQR complex catalyzes the reduction of ubiquinone-1 to ubiquinol by two successive reactions, coupled with the transport of Na(+) ions from the cytoplasm to the periplasm. NqrA to NqrE are probably involved in the second step, the conversion of ubisemiquinone to ubiquinol. This chain is Na(+)-translocating NADH-quinone reductase subunit D, found in Vibrio alginolyticus.